The chain runs to 499 residues: Lysine--tRNA ligase (499 aa).

Residues E408 and E415 each contribute to the Mg(2+) site.

The protein belongs to the class-II aminoacyl-tRNA synthetase family. In terms of assembly, homodimer. The cofactor is Mg(2+).

The protein resides in the cytoplasm. The catalysed reaction is tRNA(Lys) + L-lysine + ATP = L-lysyl-tRNA(Lys) + AMP + diphosphate. This Bacillus cereus (strain ATCC 10987 / NRS 248) protein is Lysine--tRNA ligase.